Reading from the N-terminus, the 162-residue chain is Crossover junction endodeoxyribonuclease RuvC (162 aa).

Active-site residues include aspartate 8, glutamate 69, and histidine 141. 3 residues coordinate Mg(2+): aspartate 8, glutamate 69, and histidine 141.

It belongs to the RuvC family. Homodimer which binds Holliday junction (HJ) DNA. The HJ becomes 2-fold symmetrical on binding to RuvC with unstacked arms; it has a different conformation from HJ DNA in complex with RuvA. In the full resolvosome a probable DNA-RuvA(4)-RuvB(12)-RuvC(2) complex forms which resolves the HJ. Requires Mg(2+) as cofactor.

The protein localises to the cytoplasm. The catalysed reaction is Endonucleolytic cleavage at a junction such as a reciprocal single-stranded crossover between two homologous DNA duplexes (Holliday junction).. Functionally, the RuvA-RuvB-RuvC complex processes Holliday junction (HJ) DNA during genetic recombination and DNA repair. Endonuclease that resolves HJ intermediates. Cleaves cruciform DNA by making single-stranded nicks across the HJ at symmetrical positions within the homologous arms, yielding a 5'-phosphate and a 3'-hydroxyl group; requires a central core of homology in the junction. The consensus cleavage sequence is 5'-(A/T)TT(C/G)-3'. Cleavage occurs on the 3'-side of the TT dinucleotide at the point of strand exchange. HJ branch migration catalyzed by RuvA-RuvB allows RuvC to scan DNA until it finds its consensus sequence, where it cleaves and resolves the cruciform DNA. This chain is Crossover junction endodeoxyribonuclease RuvC, found in Wolbachia sp. subsp. Drosophila simulans (strain wRi).